A 382-amino-acid polypeptide reads, in one-letter code: D-galactonate dehydratase (382 aa).

Asp-183 lines the Mg(2+) pocket. His-185 functions as the Proton donor in the catalytic mechanism. Mg(2+)-binding residues include Glu-209 and Glu-235. His-285 functions as the Proton acceptor in the catalytic mechanism.

It belongs to the mandelate racemase/muconate lactonizing enzyme family. GalD subfamily. Mg(2+) serves as cofactor.

It carries out the reaction D-galactonate = 2-dehydro-3-deoxy-D-galactonate + H2O. It functions in the pathway carbohydrate acid metabolism; D-galactonate degradation; D-glyceraldehyde 3-phosphate and pyruvate from D-galactonate: step 1/3. In terms of biological role, catalyzes the dehydration of D-galactonate to 2-keto-3-deoxy-D-galactonate. The polypeptide is D-galactonate dehydratase (Verminephrobacter eiseniae (strain EF01-2)).